The primary structure comprises 535 residues: Cytochrome P450 4c3 (535 aa).

Heme-binding residues include Glu342 and Cys481.

The protein belongs to the cytochrome P450 family. The cofactor is heme.

The protein resides in the endoplasmic reticulum membrane. It localises to the microsome membrane. Functionally, may be involved in the metabolism of insect hormones and in the breakdown of synthetic insecticides. The sequence is that of Cytochrome P450 4c3 (Cyp4c3) from Drosophila melanogaster (Fruit fly).